Consider the following 2604-residue polypeptide: Probable polyketide synthase 17 (2604 aa).

The Ketosynthase family 3 (KS3) domain maps to 11–433 (NDDIAIIGMG…GSNCHMILSE (423 aa)). Catalysis depends on for beta-ketoacyl synthase activity residues C179, H316, and H356. The acyl/malonyl transferases stretch occupies residues 631-664 (GISPSIVVGHSFGEIPSALFSDVISLETAVKIVY). S641 functions as the For acyl/malonyl transferase activity in the catalytic mechanism. Positions 937–1057 (NNLLGHDQFA…GRIGLFKHNP (121 aa)) are N-terminal hotdog fold. The PKS/mFAS DH domain maps to 937-1216 (NNLLGHDQFA…CTSLIRLKKQ (280 aa)). Residue H968 is the Proton acceptor; for dehydratase activity of the active site. The C-terminal hotdog fold stretch occupies residues 1072 to 1216 (SFTTLTKSEV…CTSLIRLKKQ (145 aa)). D1132 serves as the catalytic Proton donor; for dehydratase activity. The tract at residues 1357–1407 (GESEHFSPSNPSSPNDTPRNNSNNCSSKNNAASSDDADDDTNNEETINQLN) is disordered. Positions 1363–1390 (SPSNPSSPNDTPRNNSNNCSSKNNAASS) are enriched in low complexity. The region spanning 2507–2584 (GDSGSTQAKV…SIIQRISSKS (78 aa)) is the Carrier domain. An O-(pantetheine 4'-phosphoryl)serine modification is found at S2544. Residues 2581-2597 (SSKSTSTSTPNPTNTSK) are compositionally biased toward low complexity. Residues 2581–2604 (SSKSTSTSTPNPTNTSKQTATKKT) form a disordered region.

Pantetheine 4'-phosphate is required as a cofactor.

Its function is as follows. Probable polyketide synthase. The protein is Probable polyketide synthase 17 (pks17) of Dictyostelium discoideum (Social amoeba).